The sequence spans 793 residues: Signal transducer and activator of transcription 5A (793 aa).

Phosphotyrosine is present on Y90. S128 carries the post-translational modification Phosphoserine. Positions 589–686 (WNDGAILGFV…EVFAKYYTPV (98 aa)) constitute an SH2 domain. A Phosphotyrosine modification is found at Y682. Y694 bears the Phosphotyrosine; by JAK2 mark. The disordered stretch occupies residues 772–793 (DSLDPRLSPPAGLFTSARSSLS). Phosphoserine is present on S779.

Belongs to the transcription factor STAT family. In terms of assembly, forms a homodimer or a heterodimer with a related family member. Binds NR3C1. Interacts with NCOA1 and SOCS7. Interacts with ERBB4. Interacts with EBF4. ISGylated. In terms of processing, tyrosine phosphorylated in response to KITLG/SCF, IL2, IL3, IL7, IL15, CSF2/GMCSF, GH1, PRL, EPO and THPO. Activated KIT promotes phosphorylation on tyrosine residues and subsequent translocation to the nucleus. Tyrosine phosphorylated in response to constitutively activated FGFR1, FGFR2, FGFR3 and FGFR4. Tyrosine phosphorylation is required for DNA-binding activity and dimerization. Serine phosphorylation is also required for maximal transcriptional activity. Tyrosine phosphorylated in response to signaling via activated FLT3; wild-type FLT3 results in much weaker phosphorylation than constitutively activated mutant FLT3. Alternatively, can be phosphorylated by JAK2 at Tyr-694. In terms of tissue distribution, expressed in heart, lung, and weakly in muscle.

It is found in the cytoplasm. It localises to the nucleus. Carries out a dual function: signal transduction and activation of transcription. Mediates cellular responses to the cytokine KITLG/SCF and other growth factors. May mediate cellular responses to activated FGFR1, FGFR2, FGFR3 and FGFR4. Binds to the GAS element and activates PRL-induced transcription. Regulates the expression of milk proteins during lactation. The protein is Signal transducer and activator of transcription 5A (Stat5a) of Rattus norvegicus (Rat).